A 422-amino-acid chain; its full sequence is Proline--tRNA ligase (422 aa).

Belongs to the class-II aminoacyl-tRNA synthetase family. ProS type 2 subfamily. In terms of assembly, homodimer.

The protein resides in the cytoplasm. It carries out the reaction tRNA(Pro) + L-proline + ATP = L-prolyl-tRNA(Pro) + AMP + diphosphate. Its function is as follows. Catalyzes the attachment of proline to tRNA(Pro) in a two-step reaction: proline is first activated by ATP to form Pro-AMP and then transferred to the acceptor end of tRNA(Pro). The chain is Proline--tRNA ligase from Wolbachia sp. subsp. Drosophila simulans (strain wRi).